Reading from the N-terminus, the 298-residue chain is Small ribosomal subunit biogenesis GTPase RsgA 1 (298 aa).

Positions 63–224 (QTQLVRPPVA…VADTPGFSSY (162 aa)) constitute a CP-type G domain. GTP contacts are provided by residues 112-115 (AKTD) and 167-175 (GQTGAGKST). Zn(2+)-binding residues include C248, C253, H255, and C261.

It belongs to the TRAFAC class YlqF/YawG GTPase family. RsgA subfamily. Monomer. Associates with 30S ribosomal subunit, binds 16S rRNA. It depends on Zn(2+) as a cofactor.

It localises to the cytoplasm. In terms of biological role, one of several proteins that assist in the late maturation steps of the functional core of the 30S ribosomal subunit. Helps release RbfA from mature subunits. May play a role in the assembly of ribosomal proteins into the subunit. Circularly permuted GTPase that catalyzes slow GTP hydrolysis, GTPase activity is stimulated by the 30S ribosomal subunit. In Lactiplantibacillus plantarum (strain ATCC BAA-793 / NCIMB 8826 / WCFS1) (Lactobacillus plantarum), this protein is Small ribosomal subunit biogenesis GTPase RsgA 1.